The chain runs to 338 residues: NADPH dehydrogenase (338 aa).

22–25 is a binding site for FMN; the sequence is SPMC. Tyr-27 contributes to the substrate binding site. The FMN site is built by Ala-59 and Gln-101. Substrate is bound at residue 163–166; that stretch reads HAAH. FMN contacts are provided by residues Arg-214 and 306-307; that span reads GR.

It belongs to the NADH:flavin oxidoreductase/NADH oxidase family. NamA subfamily. In terms of assembly, homotetramer. It depends on FMN as a cofactor.

It catalyses the reaction A + NADPH + H(+) = AH2 + NADP(+). In terms of biological role, catalyzes the reduction of the double bond of an array of alpha,beta-unsaturated aldehydes and ketones. It also reduces the nitro group of nitroester and nitroaromatic compounds. It could have a role in detoxification processes. This Listeria monocytogenes serovar 1/2a (strain ATCC BAA-679 / EGD-e) protein is NADPH dehydrogenase.